Reading from the N-terminus, the 281-residue chain is Feruloyl esterase A (281 aa).

The first 21 residues, 1 to 21, serve as a signal peptide directing secretion; that stretch reads MKQFSAKYALILLATAGQALA. 3 disulfides stabilise this stretch: Cys-50-Cys-279, Cys-112-Cys-115, and Cys-248-Cys-255. Asp-98 provides a ligand contact to substrate. Asn-100 is a glycosylation site (N-linked (GlcNAc...) asparagine). Tyr-101 contacts substrate. Ser-154 (nucleophile) is an active-site residue. Catalysis depends on Asp-215, which acts as the Charge relay system. A substrate-binding site is contributed by His-268. The Charge relay system role is filled by His-268.

In terms of processing, glycosylated.

The protein localises to the secreted. The enzyme catalyses feruloyl-polysaccharide + H2O = ferulate + polysaccharide.. Inhibited by the specific serine esterase inhibitor diisopropylfluorophosphate. In terms of biological role, involved in degradation of plant cell walls. Hydrolyzes the feruloyl-arabinose ester bond in arabinoxylans, and the feruloyl-galactose ester bond in pectin. Binds to cellulose. This is Feruloyl esterase A (faeA) from Aspergillus niger.